We begin with the raw amino-acid sequence, 96 residues long: Small ribosomal subunit protein bS6 (96 aa).

It belongs to the bacterial ribosomal protein bS6 family.

In terms of biological role, binds together with bS18 to 16S ribosomal RNA. The protein is Small ribosomal subunit protein bS6 of Bacillus mycoides (strain KBAB4) (Bacillus weihenstephanensis).